The chain runs to 183 residues: CyanoP (183 aa).

Positions 1-19 (MLQRFFATALAIFVVLLGG) are cleaved as a signal peptide. Residue Cys-20 is the site of N-palmitoyl cysteine attachment. Residue Cys-20 is the site of S-diacylglycerol cysteine attachment. Asp-31, Asp-34, Asp-54, His-58, Thr-63, Glu-87, Asp-91, His-142, Glu-163, and Glu-164 together coordinate Zn(2+).

The protein belongs to the PsbP family. CyanoP subfamily. As to quaternary structure, monomer. Present in very small amounts in PSII. The cofactor is Zn(2+).

It is found in the cellular thylakoid membrane. In terms of biological role, plays a role in the early stages of photosystem II (PSII) assembly; binds to D2 (psbD) and may facilitate its incorporation into PSII. Present in less than 1% of PSII preparations. The sequence is that of CyanoP from Thermosynechococcus vestitus (strain NIES-2133 / IAM M-273 / BP-1).